The following is a 23-amino-acid chain: Unknown protein 1 (23 aa).

This is Unknown protein 1 from Coniferiporia sulphurascens (Laminated root rot fungus).